An 80-amino-acid chain; its full sequence is Styelin-C (80 aa).

The N-terminal stretch at 1 to 22 is a signal peptide; that stretch reads MQMKATILIVLVALFMIQQSEA. Tryptophan 24 carries the post-translational modification 6'-bromotryptophan. Position 53 is a leucine amide (leucine 53). Positions 55–80 are cleaved as a propeptide — removed in mature form; the sequence is DMTDEEFQEFMQDIEQAREEELLSRQ.

It localises to the secreted. In terms of biological role, bactericidal against several Gram-positive and Gram-negative bacteria. In Styela clava (Sea squirt), this protein is Styelin-C.